A 581-amino-acid chain; its full sequence is Serine/threonine-protein kinase PINK1, mitochondrial (581 aa).

Residues 1–77 (MAVRQALGRG…RFFRQSVAGL (77 aa)) constitute a mitochondrion transit peptide. Topologically, residues 78-93 (AARLQRQFVVRAWGCA) are mitochondrial intermembrane. The chain crosses the membrane as a helical span at residues 94–110 (GPCGRAVFLAFGLGLGL). The interval 111–117 (IEEKQAE) is required for outer membrane localization. At 111-581 (IEEKQAESRR…LLLCSWRAAL (471 aa)) the chain is on the cytoplasmic side. The Protein kinase domain occupies 156 to 511 (YLIGQSIGKG…VAANVLHLSL (356 aa)). Residues 162 to 170 (IGKGCSAAV) and K186 contribute to the ATP site. The interval 189–208 (GLLPGRGPGTSAPGEGQERA) is disordered. S228 is subject to Phosphoserine; by autocatalysis. The Proton acceptor role is filled by D362. Phosphoserine; by autocatalysis is present on S402.

It belongs to the protein kinase superfamily. Ser/Thr protein kinase family. In terms of assembly, upon mitochondrial depolarization, it forms a supercomplex with TOM and TIM23 complexes. PINK1-TOM-TIM23 supercomplex formation requires PINK1 interaction with TOMM20 and TOMM70 and is critical for PINK1 stabilization at the outer mitochondrial membrane, kinase activation and downstream mitophagy. Upon mitochondrial depolarization, interacts with TIMM23; the interaction is required for PINK1 accumulation at the outer mitochondrial membrane, kinase activation by autophosphorylation and PRKN recruitement to mitochondria. Interacts with PRKN. Interacts with FBXO7. Forms a complex with PRKN and PARK7. Interacts with NENF. Mg(2+) is required as a cofactor. In terms of processing, proteolytically cleaved. In healthy cells, the precursor is continuously imported into the inner mitochondrial membrane (IMM), where it is proteolytically cleaved by mitochondrial-processing peptidase (MPP) and then undergoes further proteolytic cleavage by PARL or AFG3L2 to give rise to the 52 kDa short form. The 52 kDa short form is then released into the cytosol where it rapidly undergoes proteasome-dependent degradation. In unhealthy cells, when cellular stress conditions lead to the loss of mitochondrial membrane potential, mitochondrial import is impaired leading to the precursor accumulating on the outer mitochondrial membrane (OMM). If accumulation at the OMM fails and it is imported into the depolarized mitochondria, it undergoes cleavage by the IMM protease OMA1, promoting its subsequent degradation by the proteasome. Autophosphorylated. Loss of mitochondrial membrane potential results in the precursor accumulating on the outer mitochondrial membrane (OMM) where it is activated by autophosphorylation. Autophosphorylation at Ser-228 and Ser-402 is sufficient and essential for selective recruitment of PRKN to depolarized mitochondria, via PINK1-dependent phosphorylation of ubiquitin and maybe PRKN. In terms of tissue distribution, highly expressed in heart, skeletal muscle and testis, and at lower levels in brain, placenta, liver, kidney, pancreas, prostate, ovary and small intestine. Present in the embryonic testis from an early stage of development.

It is found in the mitochondrion outer membrane. The protein localises to the mitochondrion inner membrane. Its subcellular location is the cytoplasm. It localises to the cytosol. The enzyme catalyses L-seryl-[protein] + ATP = O-phospho-L-seryl-[protein] + ADP + H(+). It carries out the reaction L-threonyl-[protein] + ATP = O-phospho-L-threonyl-[protein] + ADP + H(+). Functionally, serine/threonine-protein kinase which acts as a sensor of mitochondrial damage and protects against mitochondrial dysfunction during cellular stress. It phosphorylates mitochondrial proteins to coordinate mitochondrial quality control mechanisms that remove and replace dysfunctional mitochondrial components. Depending on the severity of mitochondrial damage, activity ranges from preventing apoptosis and stimulating mitochondrial biogenesis to eliminating severely damaged mitochondria via PINK1-PRKN-dependent mitophagy. When cellular stress results in irreversible mitochondrial damage, PINK1 accumulates at the outer mitochondrial membrane (OMM) where it phosphorylates pre-existing polyubiquitin chains at 'Ser-65', recruits PRKN from the cytosol to the OMM and activates PRKN by phosphorylation at 'Ser-65'; activated PRKN then ubiquinates VDAC1 and other OMM proteins to initiate mitophagy. The PINK1-PRKN pathway also promotes fission of damaged mitochondria through phosphorylation and PRKN-dependent degradation of mitochondrial proteins involved in fission such as MFN2. This prevents the refusion of unhealthy mitochondria with the mitochondrial network or initiates mitochondrial fragmentation facilitating their later engulfment by autophagosomes. Also promotes mitochondrial fission independently of PRKN and ATG7-mediated mitophagy, via the phosphorylation and activation of DNM1L. Regulates motility of damaged mitochondria by promoting the ubiquitination and subsequent degradation of MIRO1 and MIRO2; in motor neurons, this likely inhibits mitochondrial intracellular anterograde transport along the axons which probably increases the chance of the mitochondria undergoing mitophagy in the soma. Required for ubiquinone reduction by mitochondrial complex I by mediating phosphorylation of complex I subunit NDUFA10. Phosphorylates LETM1, positively regulating its mitochondrial calcium transport activity. The chain is Serine/threonine-protein kinase PINK1, mitochondrial (PINK1) from Homo sapiens (Human).